The following is a 63-amino-acid chain: Large ribosomal subunit protein bL35 (63 aa).

It belongs to the bacterial ribosomal protein bL35 family.

The chain is Large ribosomal subunit protein bL35 from Finegoldia magna (strain ATCC 29328 / DSM 20472 / WAL 2508) (Peptostreptococcus magnus).